The chain runs to 307 residues: NAD kinase 2 (307 aa).

Catalysis depends on Asp77, which acts as the Proton acceptor. NAD(+) contacts are provided by residues 77–78 (DG), 151–152 (NE), Asp181, 192–197 (TAYALS), and Asn251.

Belongs to the NAD kinase family. A divalent metal cation serves as cofactor.

It localises to the cytoplasm. The catalysed reaction is NAD(+) + ATP = ADP + NADP(+) + H(+). Involved in the regulation of the intracellular balance of NAD and NADP, and is a key enzyme in the biosynthesis of NADP. Catalyzes specifically the phosphorylation on 2'-hydroxyl of the adenosine moiety of NAD to yield NADP. The protein is NAD kinase 2 of Thermosynechococcus vestitus (strain NIES-2133 / IAM M-273 / BP-1).